The following is a 607-amino-acid chain: Elongation factor 4 (607 aa).

The tr-type G domain occupies 11–193; it reads KNIRNFSIIA…KIVEVVPPPE (183 aa). GTP is bound by residues 23–28 and 140–143; these read DHGKST and NKID.

Belongs to the TRAFAC class translation factor GTPase superfamily. Classic translation factor GTPase family. LepA subfamily.

It localises to the cell membrane. The catalysed reaction is GTP + H2O = GDP + phosphate + H(+). In terms of biological role, required for accurate and efficient protein synthesis under certain stress conditions. May act as a fidelity factor of the translation reaction, by catalyzing a one-codon backward translocation of tRNAs on improperly translocated ribosomes. Back-translocation proceeds from a post-translocation (POST) complex to a pre-translocation (PRE) complex, thus giving elongation factor G a second chance to translocate the tRNAs correctly. Binds to ribosomes in a GTP-dependent manner. This is Elongation factor 4 from Staphylococcus saprophyticus subsp. saprophyticus (strain ATCC 15305 / DSM 20229 / NCIMB 8711 / NCTC 7292 / S-41).